The chain runs to 225 residues: Endonuclease V (225 aa).

Positions 43 and 110 each coordinate Mg(2+).

It belongs to the endonuclease V family. Mg(2+) is required as a cofactor.

The protein localises to the cytoplasm. The enzyme catalyses Endonucleolytic cleavage at apurinic or apyrimidinic sites to products with a 5'-phosphate.. Functionally, DNA repair enzyme involved in the repair of deaminated bases. Selectively cleaves double-stranded DNA at the second phosphodiester bond 3' to a deoxyinosine leaving behind the intact lesion on the nicked DNA. The sequence is that of Endonuclease V from Thermotoga sp. (strain RQ2).